We begin with the raw amino-acid sequence, 338 residues long: UbiA prenyltransferase domain-containing protein 1 (338 aa).

Positions Met-1–Glu-39 are disordered. Ala-2 is subject to N-acetylalanine. The segment covering Ala-15–Thr-24 has biased composition (polar residues). Residues Asp-25–Glu-39 show a composition bias toward basic and acidic residues. 8 consecutive transmembrane segments (helical) span residues Leu-83–Thr-103, Phe-134–Thr-154, Leu-160–Phe-180, Leu-188–Gly-208, Ser-209–Leu-229, Ile-245–Leu-267, Thr-277–Glu-297, and Leu-315–Leu-335.

The protein belongs to the UbiA prenyltransferase family. In terms of assembly, interacts with HMGCR and SOAT1.

Its subcellular location is the endoplasmic reticulum membrane. It is found in the golgi apparatus membrane. The protein resides in the mitochondrion membrane. It catalyses the reaction menadiol + (2E,6E,10E)-geranylgeranyl diphosphate = menaquinol-4 + diphosphate. The catalysed reaction is all-trans-decaprenyl diphosphate + 4-hydroxybenzoate = 4-hydroxy-3-(all-trans-decaprenyl)benzoate + diphosphate. It participates in quinol/quinone metabolism; menaquinone biosynthesis. It functions in the pathway cofactor biosynthesis; ubiquinone biosynthesis. Its function is as follows. Prenyltransferase that mediates the formation of menaquinone-4 (MK-4) and coenzyme Q10. MK-4 is a vitamin K2 isoform required for endothelial cell development. Mediates the conversion of phylloquinone (PK) into MK-4, probably by cleaving the side chain of phylloquinone (PK) to release 2-methyl-1,4-naphthoquinone (menadione; K3) and then prenylating it with geranylgeranyl pyrophosphate (GGPP) to form MK-4. Also plays a role in cardiovascular development independently of MK-4 biosynthesis, by acting as a coenzyme Q10 biosynthetic enzyme: coenzyme Q10, also named ubiquinone, plays an important antioxidant role in the cardiovascular system. Mediates biosynthesis of coenzyme Q10 in the Golgi membrane, leading to protect cardiovascular tissues from NOS3/eNOS-dependent oxidative stress. This is UbiA prenyltransferase domain-containing protein 1 (Ubiad1) from Rattus norvegicus (Rat).